The following is a 222-amino-acid chain: Countin-3 (222 aa).

Positions 1–20 (MNKILSLFLITILLISKVMS) are cleaved as a signal peptide. Positions 21-105 (SSEECKLCTD…ESVKMCQYND (85 aa)) constitute a Saposin B-type domain. Disulfide bonds link C25/C101, C28/C95, and C56/C68. N-linked (GlcNAc...) asparagine glycans are attached at residues N108, N134, and N218.

Belongs to the countin family.

The protein localises to the secreted. Functionally, may control the size of the multicellular structure. This is Countin-3 (ctnC) from Dictyostelium discoideum (Social amoeba).